The following is a 282-amino-acid chain: MEESQNGVKYGGDATDAKEYFTIQPRSLQNCDLKDIERKTKFAHLQNYRTNYPEMGMCLIINNKNFHSSNMAVRNGTDVDALKLHETFTGLGYEVMVCNDQKSSDIIGRLKKISEEDHSKRSSFVCAILSHGEEDGSICGVDVPIHIKNLTDLFRGDRCKTLVGKPKIFFIQACRGTELDSGIETDSCSEPREEIQRIPVEADFLYAYSTVPGYCSWRDKMDGSWFIQSLCKMIKLYGSHLELIQILTCVNHMVALDFETFHAKKQIPCVVSMLTKSFYFFK.

Catalysis depends on residues His131 and Cys174.

Belongs to the peptidase C14A family. As to quaternary structure, heterotetramer that consists of two anti-parallel arranged heterodimers, each one formed by a 17 kDa (p17) and a 12 kDa (p12) subunit.

The protein localises to the cytoplasm. The enzyme catalyses Strict requirement for an Asp residue at positions P1 and P4. It has a preferred cleavage sequence of Asp-Xaa-Xaa-Asp-|- with a hydrophobic amino-acid residue at P2 and a hydrophilic amino-acid residue at P3, although Val or Ala are also accepted at this position.. In terms of biological role, important mediator of apoptosis. At the onset of apoptosis, it proteolytically cleaves poly(ADP-ribose) polymerase PARP1 at a '216-Asp-|-Gly-217' bond. In Xenopus laevis (African clawed frog), this protein is Caspase-3 (casp3).